Here is a 307-residue protein sequence, read N- to C-terminus: Serine/threonine-protein phosphatase PP2A-5 catalytic subunit (307 aa).

Mn(2+)-binding residues include aspartate 55, histidine 57, aspartate 83, and asparagine 115. Histidine 116 functions as the Proton donor in the catalytic mechanism. Residues histidine 165 and histidine 239 each coordinate Mn(2+). Leucine methyl ester is present on leucine 307.

This sequence belongs to the PPP phosphatase family. PP-2A subfamily. As to quaternary structure, PP2A consists of a common heterodimeric core enzyme, composed of a 36 kDa catalytic subunit (subunit C) and a 65 kDa constant regulatory subunit (subunit A), that associates with a variety of regulatory subunits such as subunits B (the R2/B/PR55/B55, R3/B''/PR72/PR130/PR59 and R5/B'/B56 families). Also interacts with CHIP and TAF12B. Interacts with B'THETA. Interacts with CLC-A, CLC-B, CLC-C and CLC-G. Mn(2+) serves as cofactor. Reversibly methyl esterified on Leu-307 by leucine carboxyl methyltransferase 1 (LCMT1) and pectin methylesterase 1 (PME1). Carboxyl methylation influences the affinity of the catalytic subunit for the different regulatory subunits, thereby modulating the PP2A holoenzyme's substrate specificity, enzyme activity and cellular localization. Post-translationally, phosphorylation of either threonine (by autophosphorylation-activated protein kinase) or tyrosine results in inactivation of the phosphatase. Auto-dephosphorylation has been suggested as a mechanism for reactivation. In terms of processing, ubiquitinated. CHIP-mediated ubiquitination enhances phosphatase activity after an abiotic stress such as low temperature or darkness.

The protein localises to the cytoplasm. The protein resides in the cytosol. It is found in the peroxisome. It catalyses the reaction O-phospho-L-seryl-[protein] + H2O = L-seryl-[protein] + phosphate. The catalysed reaction is O-phospho-L-threonyl-[protein] + H2O = L-threonyl-[protein] + phosphate. Associates with the serine/threonine-protein phosphatase PP2A regulatory subunits A and B' to positively regulates beta-oxidation of fatty acids and protoauxins in peroxisomes by dephosphorylating peroxisomal beta-oxidation-related proteins. Involved in the positive regulation of salt stress responses. May function by increasing chloride channel activities on vacuolar membranes. This Arabidopsis thaliana (Mouse-ear cress) protein is Serine/threonine-protein phosphatase PP2A-5 catalytic subunit.